A 286-amino-acid chain; its full sequence is Homoserine kinase (286 aa).

Residue 78-88 participates in ATP binding; that stretch reads PLARGLGSSSS.

It belongs to the GHMP kinase family. Homoserine kinase subfamily.

The protein localises to the cytoplasm. The catalysed reaction is L-homoserine + ATP = O-phospho-L-homoserine + ADP + H(+). It participates in amino-acid biosynthesis; L-threonine biosynthesis; L-threonine from L-aspartate: step 4/5. Catalyzes the ATP-dependent phosphorylation of L-homoserine to L-homoserine phosphate. This Streptococcus equi subsp. equi (strain 4047) protein is Homoserine kinase.